The sequence spans 89 residues: Gibberellin-regulated protein 10 (89 aa).

Residues 1-25 (MKFPAVKVLIISLLITSSLFILSTA) form the signal peptide.

This sequence belongs to the GASA family. Six disulfide bonds may be present. In terms of tissue distribution, expressed in vasculature of rosette leaves and roots, cotyledon and root tips and developing seeds.

It localises to the secreted. In terms of biological role, gibberellin-regulated protein that may function in hormonal controlled steps of development such as seed germination, flowering and seed maturation. The chain is Gibberellin-regulated protein 10 (GASA10) from Arabidopsis thaliana (Mouse-ear cress).